A 207-amino-acid polypeptide reads, in one-letter code: Small ribosomal subunit protein uS4c (207 aa).

The 62-residue stretch at M92–K153 folds into the S4 RNA-binding domain.

Belongs to the universal ribosomal protein uS4 family. As to quaternary structure, part of the 30S ribosomal subunit. Contacts protein S5. The interaction surface between S4 and S5 is involved in control of translational fidelity.

The protein localises to the plastid. The protein resides in the chloroplast. In terms of biological role, one of the primary rRNA binding proteins, it binds directly to 16S rRNA where it nucleates assembly of the body of the 30S subunit. Its function is as follows. With S5 and S12 plays an important role in translational accuracy. The sequence is that of Small ribosomal subunit protein uS4c (rps4) from Equisetum laevigatum (Smooth horsetail).